An 80-amino-acid polypeptide reads, in one-letter code: ATP synthase subunit c (80 aa).

The next 2 helical transmembrane spans lie at 11 to 31 and 53 to 73; these read MAAAVMMGLAAIGAAIGIGIL and FFVVMGLVDAIPMIAVGLGLY.

Belongs to the ATPase C chain family. As to quaternary structure, F-type ATPases have 2 components, F(1) - the catalytic core - and F(0) - the membrane proton channel. F(1) has five subunits: alpha(3), beta(3), gamma(1), delta(1), epsilon(1). F(0) has three main subunits: a(1), b(2) and c(10-14). The alpha and beta chains form an alternating ring which encloses part of the gamma chain. F(1) is attached to F(0) by a central stalk formed by the gamma and epsilon chains, while a peripheral stalk is formed by the delta and b chains.

The protein localises to the cell inner membrane. F(1)F(0) ATP synthase produces ATP from ADP in the presence of a proton or sodium gradient. F-type ATPases consist of two structural domains, F(1) containing the extramembraneous catalytic core and F(0) containing the membrane proton channel, linked together by a central stalk and a peripheral stalk. During catalysis, ATP synthesis in the catalytic domain of F(1) is coupled via a rotary mechanism of the central stalk subunits to proton translocation. In terms of biological role, key component of the F(0) channel; it plays a direct role in translocation across the membrane. A homomeric c-ring of between 10-14 subunits forms the central stalk rotor element with the F(1) delta and epsilon subunits. This chain is ATP synthase subunit c, found in Erwinia tasmaniensis (strain DSM 17950 / CFBP 7177 / CIP 109463 / NCPPB 4357 / Et1/99).